The chain runs to 281 residues: MNPRGNPSKMPTQIVLNRRPAAPARPQTTFTSLSQYHMYNTASTSSAPPPPPNQNFGQIREAIRTTQPTTVQLPPDCKLVEYTWQENGESRTVLIPMSNDSTEDDVRSALPQSVLESINQHQNQLRQGNAQAVHYYQKHQNPISHEKPIMVNPRQYKRIIKRREMRQKMEDSGRLPLERQKYMHESRRQHALKRRRTGGRFDANAEAAAASSEPSISSAAPSPPKAPRAPTTYAMIRPATSHPPVNIPKAPAMTYRPVQEEKKSIERISKAQMFTIPKRQQ.

2 disordered regions span residues 1 to 27 (MNPRGNPSKMPTQIVLNRRPAAPARPQ) and 163 to 261 (REMR…VQEE). The Subunit association domain (SAD) motif lies at 150–173 (MVNPRQYKRIIKRREMRQKMEDSG). Over residues 166–188 (RQKMEDSGRLPLERQKYMHESRR) the composition is skewed to basic and acidic residues. A DNA-binding region (NFYA/HAP2-type) is located at residues 180–204 (QKYMHESRRQHALKRRRTGGRFDAN). Residues 189–198 (QHALKRRRTG) are compositionally biased toward basic residues. Residues 204–220 (NAEAAAASSEPSISSAA) show a composition bias toward low complexity.

The protein belongs to the NFYA/HAP2 subunit family. Forms a heterotrimeric transcription factor complex (nfya-2-NF-Y complex) composed of nfya-2, nfyb-1 and nfyc-1. Interacts with the nfyb-1 and nfyc-1 dimer; the interaction is required for subsequent binding to the 5'-CCAAT-3' box motif in DNA. Does not interact with either nfyb-1 or nfyc-1 in their monomeric form. As to expression, highly expressed in certain parts of the gonads. Expressed in the spermatheca, intestine and in some neurons in the head. Not expressed in the intestine, the hypodermis, body wall muscle surrounding the pseudocoelomic space, secretory cells in the pharyngeal terminal bulb wall, in the small ganglia surrounding the pharynx and in the neurons running anteriorly to the sensory organs in the head.

It localises to the nucleus. Functionally, component of the sequence-specific heterotrimeric transcription factor (nfya-2-NF-Y) which specifically recognizes a 5'-CCAAT-3' box motif found in the promoters of its target genes to regulate their expression and control cellular identity in particular tissue types. In association with the components in the nfya-2-NF-Y complex, may repress the expression of the T-box transcription factor tbx-2 throughout larval development, which most likely restricts its expression to certain tissues. The chain is Nuclear transcription factor Y subunit nfya-2 from Caenorhabditis elegans.